A 234-amino-acid chain; its full sequence is CD-NTase-associated protein 13 (234 aa).

The chain crosses the membrane as a helical span at residues 20 to 42; sequence TIMKNVIANVSTAITLALMILWI.

It in the C-terminal section; belongs to the bacterial STING family.

Its subcellular location is the cell inner membrane. Effector protein of a CBASS antivirus system. CBASS (cyclic oligonucleotide-based antiphage signaling system) provides immunity against bacteriophage. The CD-NTase protein synthesizes cyclic nucleotides in response to infection; these serve as specific second messenger signals. The signals activate a diverse range of effectors, leading to bacterial cell death and thus abortive phage infection. A type I-D CBASS(GG) system. In terms of biological role, binds c-di-GMP (synthesized by the cognate CdnE encoded upstream in the same operon) and about 10-fold less well 3'3'-cGAMP, but not c-di-AMP, 2'3'-cGAMP or cUMP-AMP (tested with a protein without the transmembrane region). The effector protein for this CBASS system, its activity is stimulated by c-di-GMP and leads to cell death. The polypeptide is CD-NTase-associated protein 13 (Roseivirga ehrenbergii (strain DSM 102268 / JCM 13514 / KCTC 12282 / NCIMB 14502 / KMM 6017)).